A 411-amino-acid chain; its full sequence is Phosphopentomutase (411 aa).

Residues Asp14, Asp306, His311, Asp347, His348, and His359 each coordinate Mn(2+).

It belongs to the phosphopentomutase family. It depends on Mn(2+) as a cofactor.

It is found in the cytoplasm. The catalysed reaction is 2-deoxy-alpha-D-ribose 1-phosphate = 2-deoxy-D-ribose 5-phosphate. It catalyses the reaction alpha-D-ribose 1-phosphate = D-ribose 5-phosphate. It participates in carbohydrate degradation; 2-deoxy-D-ribose 1-phosphate degradation; D-glyceraldehyde 3-phosphate and acetaldehyde from 2-deoxy-alpha-D-ribose 1-phosphate: step 1/2. Isomerase that catalyzes the conversion of deoxy-ribose 1-phosphate (dRib-1-P) and ribose 1-phosphate (Rib-1-P) to deoxy-ribose 5-phosphate (dRib-5-P) and ribose 5-phosphate (Rib-5-P), respectively. In Lactococcus lactis subsp. lactis (strain IL1403) (Streptococcus lactis), this protein is Phosphopentomutase.